Here is a 181-residue protein sequence, read N- to C-terminus: Cyclic AMP-dependent transcription factor ATF-3 (181 aa).

A Glycyl lysine isopeptide (Lys-Gly) (interchain with G-Cter in SUMO2) cross-link involves residue K78. A bZIP domain is found at 86–149 (DERKKRRRER…QHLIYMLNLH (64 aa)). Residues 88–110 (RKKRRRERNKIAAAKCRNKKKEK) form a basic motif region. Positions 114-142 (LQKESEKLESVNAELKAQIEELKNEKQHL) are leucine-zipper. T162 carries the post-translational modification Phosphothreonine. K175 is covalently cross-linked (Glycyl lysine isopeptide (Lys-Gly) (interchain with G-Cter in SUMO2)).

Belongs to the bZIP family. ATF subfamily. Binds DNA as a homodimer or a heterodimer. Interacts with KAT5; promoting KAT5 autoacetylation and KAT5 deubiquitination by USP7.

The protein localises to the nucleus. This protein binds the cAMP response element (CRE) (consensus: 5'-GTGACGT[AC][AG]-3'), a sequence present in many viral and cellular promoters. Represses transcription from promoters with ATF sites. It may repress transcription by stabilizing the binding of inhibitory cofactors at the promoter. In terms of biological role, activates transcription presumably by sequestering inhibitory cofactors away from the promoters. Its function is as follows. Stress-induced isoform, counteracts the transcriptional repression of isoform 1. This is Cyclic AMP-dependent transcription factor ATF-3 from Homo sapiens (Human).